The chain runs to 172 residues: Large ribosomal subunit protein uL10 (172 aa).

It belongs to the universal ribosomal protein uL10 family. Part of the ribosomal stalk of the 50S ribosomal subunit. The N-terminus interacts with L11 and the large rRNA to form the base of the stalk. The C-terminus forms an elongated spine to which L12 dimers bind in a sequential fashion forming a multimeric L10(L12)X complex.

Forms part of the ribosomal stalk, playing a central role in the interaction of the ribosome with GTP-bound translation factors. This chain is Large ribosomal subunit protein uL10, found in Chlorobium limicola (strain DSM 245 / NBRC 103803 / 6330).